The following is a 218-amino-acid chain: Probable carboxylesterase clz11 (218 aa).

Residues leucine 7 to glycine 9 carry the Involved in the stabilization of the negatively charged intermediate by the formation of the oxyanion hole motif. Residue serine 77 is part of the active site.

This sequence belongs to the 'GDXG' lipolytic enzyme family.

The catalysed reaction is a carboxylic ester + H2O = an alcohol + a carboxylate + H(+). Its pathway is secondary metabolite biosynthesis. Its function is as follows. Probable carboxylesterase; part of the gene cluster that mediates the biosynthesis of squalestatin S1 (SQS1, also known as zaragozic acid A), a heavily oxidized fungal polyketide that offers potent cholesterol lowering activity by targeting squalene synthase (SS). SQS1 is composed of a 2,8-dioxobicyclic[3.2.1]octane-3,4,5-tricarboxyclic acid core that is connected to two lipophilic polyketide arms. These initial steps feature the priming of an unusual benzoic acid starter unit onto the highly reducing polyketide synthase clz14, followed by oxaloacetate extension and product release to generate a tricarboxylic acid containing product. The phenylalanine ammonia lyase (PAL) clz10 and the acyl-CoA ligase clz12 are involved in transforming phenylalanine into benzoyl-CoA. The citrate synthase-like protein clz17 is involved in connecting the C-alpha-carbons of the hexaketide chain and oxaloacetate to afford the tricarboxylic acid unit. The potential hydrolytic enzymes, clz11 and clz13, are in close proximity to pks2 and may participate in product release. On the other side, the tetraketide arm is synthesized by a the squalestatin tetraketide synthase clz2 and enzymatically esterified to the core in the last biosynthetic step, by the acetyltransferase clz6. The biosynthesis of the tetraketide must involve 3 rounds of chain extension. After the first and second rounds methyl-transfer occurs, and in all rounds of extension the ketoreductase and dehydratase are active. The enoyl reductase and C-MeT of clz2 are not active in the final round of extension. The acetyltransferase clz6 appears to have a broad substrate selectivity for its acyl CoA substrate, allowing the in vitro synthesis of novel squalestatins. The biosynthesis of SQS1 requires several oxidative steps likely performed by oxidoreductases clz3, clz15 and clz16. Finally, in support of the identification of the cluster as being responsible for SQS1 production, the cluster contains a gene encoding a putative squalene synthase (SS) clz20, suggesting a likely mechanism for self-resistance. The sequence is that of Probable carboxylesterase clz11 from Cochliobolus lunatus (Filamentous fungus).